Reading from the N-terminus, the 68-residue chain is Riparin-1.6 (68 aa).

Residues 1–15 form the signal peptide; that stretch reads MKIIVFLAVLMLVSA. The propeptide occupies 16–41; that stretch reads QVCLVSAAEMEHSSDNELSSRDLVKR. Cys47 and Cys53 are joined by a disulfide. Cys53 is subject to Cysteine amide. A propeptide spanning residues 57–68 is cleaved from the precursor; that stretch reads DIESSEGANGGE.

Expressed by the skin glands.

The protein resides in the secreted. This chain is Riparin-1.6, found in Crinia riparia (Streambank froglet).